The chain runs to 367 residues: 3-dehydroquinate synthase (367 aa).

NAD(+)-binding positions include 111–115, 135–136, lysine 148, lysine 157, and 175–178; these read GVVGD, TS, and TLDT. Positions 190, 254, and 271 each coordinate Zn(2+).

This sequence belongs to the sugar phosphate cyclases superfamily. Dehydroquinate synthase family. Requires Co(2+) as cofactor. It depends on Zn(2+) as a cofactor. NAD(+) serves as cofactor.

It localises to the cytoplasm. The catalysed reaction is 7-phospho-2-dehydro-3-deoxy-D-arabino-heptonate = 3-dehydroquinate + phosphate. It participates in metabolic intermediate biosynthesis; chorismate biosynthesis; chorismate from D-erythrose 4-phosphate and phosphoenolpyruvate: step 2/7. Catalyzes the conversion of 3-deoxy-D-arabino-heptulosonate 7-phosphate (DAHP) to dehydroquinate (DHQ). The protein is 3-dehydroquinate synthase of Salinibacter ruber (strain DSM 13855 / M31).